The primary structure comprises 158 residues: N5-carboxyaminoimidazole ribonucleotide mutase (158 aa).

Positions 10, 13, and 40 each coordinate substrate.

This sequence belongs to the AIR carboxylase family. Class I subfamily.

It catalyses the reaction 5-carboxyamino-1-(5-phospho-D-ribosyl)imidazole + H(+) = 5-amino-1-(5-phospho-D-ribosyl)imidazole-4-carboxylate. It participates in purine metabolism; IMP biosynthesis via de novo pathway; 5-amino-1-(5-phospho-D-ribosyl)imidazole-4-carboxylate from 5-amino-1-(5-phospho-D-ribosyl)imidazole (N5-CAIR route): step 2/2. Functionally, catalyzes the conversion of N5-carboxyaminoimidazole ribonucleotide (N5-CAIR) to 4-carboxy-5-aminoimidazole ribonucleotide (CAIR). The protein is N5-carboxyaminoimidazole ribonucleotide mutase of Saccharolobus solfataricus (strain ATCC 35092 / DSM 1617 / JCM 11322 / P2) (Sulfolobus solfataricus).